Consider the following 200-residue polypeptide: ATP-dependent Clp protease proteolytic subunit 2 (200 aa).

Serine 101 functions as the Nucleophile in the catalytic mechanism. The active site involves histidine 126.

This sequence belongs to the peptidase S14 family. Fourteen ClpP subunits assemble into 2 heptameric rings which stack back to back to give a disk-like structure with a central cavity, resembling the structure of eukaryotic proteasomes.

The protein resides in the cytoplasm. The catalysed reaction is Hydrolysis of proteins to small peptides in the presence of ATP and magnesium. alpha-casein is the usual test substrate. In the absence of ATP, only oligopeptides shorter than five residues are hydrolyzed (such as succinyl-Leu-Tyr-|-NHMec, and Leu-Tyr-Leu-|-Tyr-Trp, in which cleavage of the -Tyr-|-Leu- and -Tyr-|-Trp bonds also occurs).. Functionally, cleaves peptides in various proteins in a process that requires ATP hydrolysis. Has a chymotrypsin-like activity. Plays a major role in the degradation of misfolded proteins. The polypeptide is ATP-dependent Clp protease proteolytic subunit 2 (Prochlorococcus marinus (strain NATL2A)).